The following is a 302-amino-acid chain: Sulfate adenylyltransferase subunit 2 (302 aa).

Belongs to the PAPS reductase family. CysD subfamily. As to quaternary structure, heterodimer composed of CysD, the smaller subunit, and CysN.

It carries out the reaction sulfate + ATP + H(+) = adenosine 5'-phosphosulfate + diphosphate. Its pathway is sulfur metabolism; hydrogen sulfide biosynthesis; sulfite from sulfate: step 1/3. With CysN forms the ATP sulfurylase (ATPS) that catalyzes the adenylation of sulfate producing adenosine 5'-phosphosulfate (APS) and diphosphate, the first enzymatic step in sulfur assimilation pathway. APS synthesis involves the formation of a high-energy phosphoric-sulfuric acid anhydride bond driven by GTP hydrolysis by CysN coupled to ATP hydrolysis by CysD. This chain is Sulfate adenylyltransferase subunit 2, found in Buchnera aphidicola subsp. Acyrthosiphon pisum (strain 5A).